A 297-amino-acid chain; its full sequence is Putative S-adenosyl-L-methionine-dependent methyltransferase MSMEG_0614/MSMEI_0598 (297 aa).

Residues D125 and 154–155 each bind S-adenosyl-L-methionine; that span reads DL.

Belongs to the UPF0677 family.

Its function is as follows. Exhibits S-adenosyl-L-methionine-dependent methyltransferase activity. The protein is Putative S-adenosyl-L-methionine-dependent methyltransferase MSMEG_0614/MSMEI_0598 of Mycolicibacterium smegmatis (strain ATCC 700084 / mc(2)155) (Mycobacterium smegmatis).